Here is a 124-residue protein sequence, read N- to C-terminus: Fluoride-specific ion channel FluC (124 aa).

Transmembrane regions (helical) follow at residues 4-24, 32-52, 68-88, and 96-116; these read VIFIGIFGALGCLCRYYLSGW, AFPYGTFAVNIIGAFLIGLIM, GLTIGFLGGLTTFSTFSYETF, and LLIASVNVLTSVLVCLVFTWL. Positions 75 and 78 each coordinate Na(+).

The protein belongs to the fluoride channel Fluc/FEX (TC 1.A.43) family.

The protein resides in the cell inner membrane. The enzyme catalyses fluoride(in) = fluoride(out). With respect to regulation, na(+) is not transported, but it plays an essential structural role and its presence is essential for fluoride channel function. In terms of biological role, fluoride-specific ion channel. Important for reducing fluoride concentration in the cell, thus reducing its toxicity. This Geotalea daltonii (strain DSM 22248 / JCM 15807 / FRC-32) (Geobacter daltonii) protein is Fluoride-specific ion channel FluC.